The primary structure comprises 119 residues: NADH-quinone oxidoreductase subunit A (119 aa).

Helical transmembrane passes span Val-9–Leu-29, Leu-63–Val-83, and Ile-88–Val-108.

The protein belongs to the complex I subunit 3 family. In terms of assembly, NDH-1 is composed of 14 different subunits. Subunits NuoA, H, J, K, L, M, N constitute the membrane sector of the complex.

Its subcellular location is the cell inner membrane. It carries out the reaction a quinone + NADH + 5 H(+)(in) = a quinol + NAD(+) + 4 H(+)(out). In terms of biological role, NDH-1 shuttles electrons from NADH, via FMN and iron-sulfur (Fe-S) centers, to quinones in the respiratory chain. The immediate electron acceptor for the enzyme in this species is believed to be ubiquinone. Couples the redox reaction to proton translocation (for every two electrons transferred, four hydrogen ions are translocated across the cytoplasmic membrane), and thus conserves the redox energy in a proton gradient. The polypeptide is NADH-quinone oxidoreductase subunit A (Leptothrix cholodnii (strain ATCC 51168 / LMG 8142 / SP-6) (Leptothrix discophora (strain SP-6))).